A 116-amino-acid chain; its full sequence is Large ribosomal subunit protein bL17 (116 aa).

It belongs to the bacterial ribosomal protein bL17 family. As to quaternary structure, part of the 50S ribosomal subunit. Contacts protein L32.

The protein is Large ribosomal subunit protein bL17 of Synechococcus elongatus (strain ATCC 33912 / PCC 7942 / FACHB-805) (Anacystis nidulans R2).